We begin with the raw amino-acid sequence, 311 residues long: Halocin-S8 (311 aa).

2 propeptides span residues 1–230 (MSDK…IQLQ) and 267–311 (TVAC…TSFW).

The protein localises to the secreted. Its function is as follows. Has antibacterial activity against the haloarchaeons H.salinarium NRC817, Halobacterium GRB and H.gibbonsii. This chain is Halocin-S8 (halS8), found in Haloarchaeon S8a.